The primary structure comprises 72 residues: DNA-directed RNA polymerase subunit omega (72 aa).

Belongs to the RNA polymerase subunit omega family. The RNAP catalytic core consists of 2 alpha, 1 beta, 1 beta' and 1 omega subunit. When a sigma factor is associated with the core the holoenzyme is formed, which can initiate transcription.

The catalysed reaction is RNA(n) + a ribonucleoside 5'-triphosphate = RNA(n+1) + diphosphate. Its function is as follows. Promotes RNA polymerase assembly. Latches the N- and C-terminal regions of the beta' subunit thereby facilitating its interaction with the beta and alpha subunits. The sequence is that of DNA-directed RNA polymerase subunit omega from Clostridium beijerinckii (strain ATCC 51743 / NCIMB 8052) (Clostridium acetobutylicum).